Here is a 382-residue protein sequence, read N- to C-terminus: Fimbrial usher domain-containing protein YdeT (382 aa).

This Escherichia coli O157:H7 protein is Fimbrial usher domain-containing protein YdeT (ydeT).